The following is a 334-amino-acid chain: Anthranilate phosphoribosyltransferase (334 aa).

5-phospho-alpha-D-ribose 1-diphosphate contacts are provided by residues Gly-79, 82–83 (GD), Ser-87, 89–92 (NIST), 107–115 (KHGNRSISS), and Ser-119. Gly-79 contacts anthranilate. Residue Ser-91 participates in Mg(2+) binding. Asn-110 lines the anthranilate pocket. Arg-165 is an anthranilate binding site. Mg(2+)-binding residues include Asp-224 and Glu-225.

Belongs to the anthranilate phosphoribosyltransferase family. Homodimer. It depends on Mg(2+) as a cofactor.

It catalyses the reaction N-(5-phospho-beta-D-ribosyl)anthranilate + diphosphate = 5-phospho-alpha-D-ribose 1-diphosphate + anthranilate. It participates in amino-acid biosynthesis; L-tryptophan biosynthesis; L-tryptophan from chorismate: step 2/5. Catalyzes the transfer of the phosphoribosyl group of 5-phosphorylribose-1-pyrophosphate (PRPP) to anthranilate to yield N-(5'-phosphoribosyl)-anthranilate (PRA). This Streptococcus gordonii (strain Challis / ATCC 35105 / BCRC 15272 / CH1 / DL1 / V288) protein is Anthranilate phosphoribosyltransferase.